The chain runs to 701 residues: Ephexin-1 (701 aa).

Composition is skewed to basic and acidic residues over residues 1 to 11 and 26 to 48; these read METKNSEDQGK and GPAE…EEPR. Positions 1–141 are disordered; it reads METKNSEDQG…TPEECPALTD (141 aa). A regulatory region; modulates activity toward RHOA, RAC1 and CDC42 region spans residues 1–264; the sequence is METKNSEDQG…LDILQPEETK (264 aa). The segment covering 120–132 has biased composition (polar residues); that stretch reads ASESSSTPGNGTT. At Tyr-172 the chain carries Phosphotyrosine. Positions 187–226 are disordered; sequence RRQQDAEIQGNSDGSQAGEDNAEEEEEEEEEPASPPERRA. Residues 206–218 show a composition bias toward acidic residues; it reads DNAEEEEEEEEEP. In terms of domain architecture, DH spans 264–448; the sequence is KLQEAMFELV…EMVVKACNEG (185 aa). One can recognise a PH domain in the interval 480–592; sequence WLLKQGELQQ…WMTSLAPNRR (113 aa). The SH3 domain occupies 603–664; it reads LDCPQVQCVH…PSSMTEEILN (62 aa). The segment covering 679 to 690 has biased composition (basic and acidic residues); the sequence is HKMEDPQRSQNK. Residues 679–701 form a disordered region; that stretch reads HKMEDPQRSQNKDRRKLGSRNRQ. Basic residues predominate over residues 691–701; it reads DRRKLGSRNRQ.

As to quaternary structure, interacts with CDK5R1 and EPHA4; activated by EPHA4 through the CDK5 kinase. Phosphorylation by CDK5 upon EPHA4 activation by EFNA1 may regulate dendritic spine morphogenesis. Src-dependent phosphorylation at Tyr-172 upon EPHA4 activation increases the guanine exchange factor activity toward RHOA. As to expression, expressed in telencephalic neurons (at protein level). Expressed in brain, spinal cord and testis.

Its subcellular location is the cytoplasm. The protein resides in the membrane. It is found in the cell projection. The protein localises to the growth cone. Acts as a guanine nucleotide exchange factor (GEF) which differentially activates the GTPases RHOA, RAC1 and CDC42. Plays a role in axon guidance regulating ephrin-induced growth cone collapse and dendritic spine morphogenesis. Upon activation by ephrin through EPHA4, the GEF activity switches toward RHOA resulting in its activation. Activated RHOA promotes cone retraction at the expense of RAC1- and CDC42-stimulated growth cone extension. The chain is Ephexin-1 (Ngef) from Rattus norvegicus (Rat).